We begin with the raw amino-acid sequence, 86 residues long: MKSIVFVALFGLALLAVVCSASEDAHKELLKEVVRAMVVDKTDAVQAEERKCRWYLGGCSQDGDCCKHLQCHSNYEWCVWDGTFSK.

An N-terminal signal peptide occupies residues 1 to 21 (MKSIVFVALFGLALLAVVCSA). Positions 22 to 50 (SEDAHKELLKEVVRAMVVDKTDAVQAEER) are excised as a propeptide. Cystine bridges form between cysteine 52/cysteine 66, cysteine 59/cysteine 71, and cysteine 65/cysteine 78.

Belongs to the neurotoxin 10 (Hwtx-1) family. 17 (Hntx-9) subfamily. As to expression, expressed by the venom gland.

Its subcellular location is the secreted. Its function is as follows. Ion channel inhibitor. The sequence is that of Omega-theraphotoxin-Hhn1b from Cyriopagopus hainanus (Chinese bird spider).